A 274-amino-acid polypeptide reads, in one-letter code: Ethanolamine ammonia-lyase small subunit (274 aa).

The adenosylcob(III)alamin site is built by Val161, Glu182, and Cys211.

It belongs to the EutC family. The basic unit is a heterodimer which dimerizes to form tetramers. The heterotetramers trimerize; 6 large subunits form a core ring with 6 small subunits projecting outwards. It depends on adenosylcob(III)alamin as a cofactor.

The protein localises to the bacterial microcompartment. It carries out the reaction ethanolamine = acetaldehyde + NH4(+). Its pathway is amine and polyamine degradation; ethanolamine degradation. Its function is as follows. Catalyzes the deamination of various vicinal amino-alcohols to oxo compounds. Allows this organism to utilize ethanolamine as the sole source of nitrogen and carbon in the presence of external vitamin B12. The polypeptide is Ethanolamine ammonia-lyase small subunit (Pseudomonas fluorescens (strain Pf0-1)).